A 172-amino-acid chain; its full sequence is GTP-dependent dephospho-CoA kinase (172 aa).

GTP contacts are provided by D40, V41, V42, D59, and E112.

The protein belongs to the GTP-dependent DPCK family.

It catalyses the reaction 3'-dephospho-CoA + GTP = GDP + CoA + H(+). It participates in cofactor biosynthesis; coenzyme A biosynthesis. Its function is as follows. Catalyzes the GTP-dependent phosphorylation of the 3'-hydroxyl group of dephosphocoenzyme A to form coenzyme A (CoA). The sequence is that of GTP-dependent dephospho-CoA kinase from Methanospirillum hungatei JF-1 (strain ATCC 27890 / DSM 864 / NBRC 100397 / JF-1).